Reading from the N-terminus, the 354-residue chain is CREB/ATF bZIP transcription factor (354 aa).

Disordered regions lie at residues methionine 1–glutamate 95, proline 113–methionine 156, and glycine 171–alanine 214. Serine 50 bears the Phosphoserine mark. Residues aspartate 121–serine 132 are compositionally biased toward low complexity. Composition is skewed to gly residues over residues serine 133 to tryptophan 143 and proline 190 to glycine 199. In terms of domain architecture, bZIP spans glutamine 204–leucine 267. Positions alanine 205–alanine 214 are enriched in low complexity. Residues arginine 219–lysine 226 form a basic motif region. A leucine-zipper region spans residues leucine 232–leucine 267. The HCFC1-binding motif (HBM) motif lies at aspartate 303 to tyrosine 306.

The protein belongs to the bZIP family. ATF subfamily. In terms of assembly, interacts with HCFC1; the interaction inhibits CREB3 transcriptional activity. Interacts with CREB3; the interaction occurs only in combination with HCFC1. As to expression, in adults, expressed most abundantly in heart, liver and skeletal muscle, moderately abundant in kidney and pancreas, and barely detectable in lung. In fetal tissues, expressed most abundantly in kidney and very low amounts in heart, lung and liver.

It is found in the nucleus. Functionally, strongly activates transcription when bound to HCFC1. Suppresses the expression of HSV proteins in cells infected with the virus in a HCFC1-dependent manner. Also suppresses the HCFC1-dependent transcriptional activation by CREB3 and reduces the amount of CREB3 in the cell. Able to down-regulate expression of some cellular genes in CREBZF-expressing cells. In Homo sapiens (Human), this protein is CREB/ATF bZIP transcription factor (CREBZF).